The sequence spans 366 residues: Chorismate synthase (366 aa).

The NADP(+) site is built by Arg-48 and Arg-54. FMN is bound by residues 125-127 (RSS), 238-239 (NA), Gly-278, 293-297 (KPTSS), and Arg-319.

It belongs to the chorismate synthase family. As to quaternary structure, homotetramer. FMNH2 is required as a cofactor.

It carries out the reaction 5-O-(1-carboxyvinyl)-3-phosphoshikimate = chorismate + phosphate. It participates in metabolic intermediate biosynthesis; chorismate biosynthesis; chorismate from D-erythrose 4-phosphate and phosphoenolpyruvate: step 7/7. Catalyzes the anti-1,4-elimination of the C-3 phosphate and the C-6 proR hydrogen from 5-enolpyruvylshikimate-3-phosphate (EPSP) to yield chorismate, which is the branch point compound that serves as the starting substrate for the three terminal pathways of aromatic amino acid biosynthesis. This reaction introduces a second double bond into the aromatic ring system. The sequence is that of Chorismate synthase from Paraburkholderia phymatum (strain DSM 17167 / CIP 108236 / LMG 21445 / STM815) (Burkholderia phymatum).